The primary structure comprises 240 residues: MGRIFETRKATMFARWNKMAKAFTRISKDIAIAVKGGGPNPDNNPALRRVLQNARHLNMPKDKVEAAIKRASGQDQQAYEVVVYEGYAPHGVAVMVETATDNVVRTVANVRMHFKNNGGNMGNTGSVAFQFRRMGVFRLAPEGIDQDALELDLIDHGLEEMGESTGEKGEKLLVIRCAFESFGQLQAALEERKLNVLSAESEYVAQTPVQLGEEQAREVLELVDALEQDEDVQHVFHNLA.

The protein belongs to the TACO1 family.

It localises to the cytoplasm. This Anaeromyxobacter dehalogenans (strain 2CP-1 / ATCC BAA-258) protein is Probable transcriptional regulatory protein A2cp1_1765.